Consider the following 419-residue polypeptide: Acetyl transferase GW6a (419 aa).

The region spanning 12-210 (VRVREFDVEK…GHPVHAHRLP (199 aa)) is the N-acetyltransferase domain. A disordered region spans residues 44–68 (VHDHADDGDGAAAKEKKKTKTKTKK). The span at 58–68 (EKKKTKTKTKK) shows a compositional bias: basic residues.

The protein belongs to the acetyltransferase family. Interacts (via C-terminus) with HDR3 (via N-terminus). Post-translationally, ubiquitinated at Lys-63 by HDR3. Polyubiquitination of GW6A delays its degradation by the 26S proteasome and enhances GW6A histone acetyltransferase activity. As to expression, expressed in roots, leaf blades, leaf sheaths, shoot apical meristem and young panicles.

It localises to the nucleus. In terms of biological role, possesses intrinsic histone acetyltransferase activity and acts as a positive regulator of grain weight, hull size, yield, and plant biomass. Regulates postitively grain weight and yield by enlarging spikelet hulls via increasing cell number and accelerating grain filling. In vitro, catalyzes the acetylation of histone H4 at Lys-6 (H4K5ac), Lys-13 (H4K12ac) and Lys-17 (H4K16ac). Involved in the regulation of plastochron (the time interval between leaf initiation event). This is Acetyl transferase GW6a from Oryza sativa subsp. japonica (Rice).